Consider the following 223-residue polypeptide: Cytotoxic T-lymphocyte protein 4 (223 aa).

An N-terminal signal peptide occupies residues 1 to 35; the sequence is MAGFGFRRHGVQPDLASRTWPCTALFSLLFIPVFS. Topologically, residues 36–161 are extracellular; that stretch reads KGMHAAQPAV…IDPEPCPDSD (126 aa). One can recognise an Ig-like V-type domain in the interval 39–140; the sequence is HAAQPAVVLA…VELMYPPPYY (102 aa). Residues 46–50 form a homodimerization region; that stretch reads VLASS. Intrachain disulfides connect C58/C129 and C85/C103. N113 carries an N-linked (GlcNAc...) asparagine glycan. Positions 134–139 are important for interaction with CD80 and CD86; sequence MYPPPY. An N-linked (GlcNAc...) asparagine glycan is attached at N145. Residues 150–155 are homodimerization; sequence YVIDPE. The chain crosses the membrane as a helical span at residues 162-182; sequence FLLWILAAVSSGLFFYSFLIT. The Cytoplasmic segment spans residues 183 to 223; sequence AVSLSKMLKKRSPLTTGVYVKMPPTGPECEKQFQPYFIPIN. At Y201 the chain carries Phosphotyrosine; by TXK and JAK2.

In terms of assembly, homodimer; disulfide-linked. Binds to CD80/B7-1 and CD86/B7.2. Interacts with ICOSLG. In terms of processing, N-glycosylation is important for dimerization. Post-translationally, phosphorylation at Tyr-201 prevents binding to the AP-2 adapter complex, blocks endocytosis, and leads to retention of CTLA4 on the cell surface.

It is found in the cell membrane. Functionally, inhibitory receptor acting as a major negative regulator of T-cell responses. The affinity of CTLA4 for its natural B7 family ligands, CD80 and CD86, is considerably stronger than the affinity of their cognate stimulatory coreceptor CD28. The chain is Cytotoxic T-lymphocyte protein 4 (CTLA4) from Canis lupus familiaris (Dog).